The sequence spans 356 residues: Chorismate synthase (356 aa).

Arginine 44 contributes to the NADP(+) binding site. FMN contacts are provided by residues 121–123 (HFS), glycine 278, 293–297 (KPTPS), and arginine 320.

Belongs to the chorismate synthase family. It depends on FMNH2 as a cofactor.

The catalysed reaction is 5-O-(1-carboxyvinyl)-3-phosphoshikimate = chorismate + phosphate. Its pathway is metabolic intermediate biosynthesis; chorismate biosynthesis; chorismate from D-erythrose 4-phosphate and phosphoenolpyruvate: step 7/7. Its function is as follows. Catalyzes the anti-1,4-elimination of the C-3 phosphate and the C-6 proR hydrogen from 5-enolpyruvylshikimate-3-phosphate (EPSP) to yield chorismate, which is the branch point compound that serves as the starting substrate for the three terminal pathways of aromatic amino acid biosynthesis. This reaction introduces a second double bond into the aromatic ring system. The polypeptide is Chorismate synthase (Pyrococcus abyssi (strain GE5 / Orsay)).